We begin with the raw amino-acid sequence, 250 residues long: Flavin-dependent thymidylate synthase (250 aa).

The 227-residue stretch at 7-233 (LRVQLIAKTE…PQVFSDFEIT (227 aa)) folds into the ThyX domain. Residues S71, 95–97 (RHR), and Q103 contribute to the FAD site. Residues 92 to 95 (ELIR), 103 to 107 (QLSQR), and R172 contribute to the dUMP site. The ThyX motif signature appears at 95-105 (RHRHFSYSQLS). FAD contacts are provided by residues 188-190 (NYR) and H194. R199 is a dUMP binding site. R199 serves as the catalytic Involved in ionization of N3 of dUMP, leading to its activation.

Belongs to the thymidylate synthase ThyX family. Homotetramer. FAD is required as a cofactor.

It catalyses the reaction dUMP + (6R)-5,10-methylene-5,6,7,8-tetrahydrofolate + NADPH + H(+) = dTMP + (6S)-5,6,7,8-tetrahydrofolate + NADP(+). The protein operates within pyrimidine metabolism; dTTP biosynthesis. Catalyzes the reductive methylation of 2'-deoxyuridine-5'-monophosphate (dUMP) to 2'-deoxythymidine-5'-monophosphate (dTMP) while utilizing 5,10-methylenetetrahydrofolate (mTHF) as the methyl donor, and NADPH and FADH(2) as the reductant. The sequence is that of Flavin-dependent thymidylate synthase from Mycolicibacterium gilvum (strain PYR-GCK) (Mycobacterium gilvum (strain PYR-GCK)).